Here is a 240-residue protein sequence, read N- to C-terminus: 1-(5-phosphoribosyl)-5-[(5-phosphoribosylamino)methylideneamino] imidazole-4-carboxamide isomerase (240 aa).

Residue aspartate 8 is the Proton acceptor of the active site. Catalysis depends on aspartate 130, which acts as the Proton donor.

Belongs to the HisA/HisF family.

It localises to the cytoplasm. The enzyme catalyses 1-(5-phospho-beta-D-ribosyl)-5-[(5-phospho-beta-D-ribosylamino)methylideneamino]imidazole-4-carboxamide = 5-[(5-phospho-1-deoxy-D-ribulos-1-ylimino)methylamino]-1-(5-phospho-beta-D-ribosyl)imidazole-4-carboxamide. Its pathway is amino-acid biosynthesis; L-histidine biosynthesis; L-histidine from 5-phospho-alpha-D-ribose 1-diphosphate: step 4/9. The protein is 1-(5-phosphoribosyl)-5-[(5-phosphoribosylamino)methylideneamino] imidazole-4-carboxamide isomerase of Flavobacterium johnsoniae (strain ATCC 17061 / DSM 2064 / JCM 8514 / BCRC 14874 / CCUG 350202 / NBRC 14942 / NCIMB 11054 / UW101) (Cytophaga johnsonae).